Consider the following 478-residue polypeptide: Zinc finger and SCAN domain-containing protein 26 (478 aa).

Residue Lys17 forms a Glycyl lysine isopeptide (Lys-Gly) (interchain with G-Cter in SUMO2) linkage. Residues 51–133 enclose the SCAN box domain; that stretch reads CKQFRQLRYE…VVLEDLQLDL (83 aa). 2 disordered regions span residues 159–181 and 200–226; these read GVQE…KGEE and ESSG…AKPK. Composition is skewed to basic and acidic residues over residues 164–181 and 207–226; these read QVRH…KGEE and EPME…AKPK. A C2H2-type 1; degenerate zinc finger spans residues 231 to 253; sequence YKCSEREQRFIQHLDLIEHASTH. C2H2-type zinc fingers lie at residues 282 to 304, 310 to 332, 338 to 360, 366 to 388, 394 to 416, 422 to 444, and 450 to 472; these read HQCH…QKIH, YQCN…LRIH, YLCI…QRIH, CECK…QRIH, HQCN…HRIH, FKCN…VRIH, and YQCS…QRYH.

It is found in the nucleus. In terms of biological role, may be involved in transcriptional regulation. This Homo sapiens (Human) protein is Zinc finger and SCAN domain-containing protein 26 (ZSCAN26).